A 530-amino-acid polypeptide reads, in one-letter code: Autoinducer-2 kinase (530 aa).

It belongs to the FGGY kinase family.

The protein resides in the cytoplasm. The enzyme catalyses (S)-4,5-dihydroxypentane-2,3-dione + ATP = (2S)-2-hydroxy-3,4-dioxopentyl phosphate + ADP + H(+). In terms of biological role, catalyzes the phosphorylation of autoinducer-2 (AI-2) to phospho-AI-2, which subsequently inactivates the transcriptional regulator LsrR and leads to the transcription of the lsr operon. Phosphorylates the ring-open form of (S)-4,5-dihydroxypentane-2,3-dione (DPD), which is the precursor to all AI-2 signaling molecules, at the C5 position. The protein is Autoinducer-2 kinase of Enterobacter sp. (strain 638).